A 581-amino-acid chain; its full sequence is Chaperonin GroEL 1 (581 aa).

ATP-binding positions include 29-32 (TIGP), 86-90 (DGTTT), G413, and D492. Residues 522–541 (PEPEAAGPGGPGADPMGGMG) form a disordered region. The segment covering 528–541 (GPGGPGADPMGGMG) has biased composition (gly residues).

This sequence belongs to the chaperonin (HSP60) family. In terms of assembly, forms a cylinder of 14 subunits composed of two heptameric rings stacked back-to-back. Interacts with the co-chaperonin GroES.

The protein localises to the cytoplasm. It catalyses the reaction ATP + H2O + a folded polypeptide = ADP + phosphate + an unfolded polypeptide.. Functionally, together with its co-chaperonin GroES, plays an essential role in assisting protein folding. The GroEL-GroES system forms a nano-cage that allows encapsulation of the non-native substrate proteins and provides a physical environment optimized to promote and accelerate protein folding. The polypeptide is Chaperonin GroEL 1 (Prochlorococcus marinus (strain MIT 9301)).